Reading from the N-terminus, the 84-residue chain is Putative regulatory protein Hore_09800 (84 aa).

Belongs to the RemA family.

The chain is Putative regulatory protein Hore_09800 from Halothermothrix orenii (strain H 168 / OCM 544 / DSM 9562).